A 115-amino-acid chain; its full sequence is DNA-binding protein APE_1087b (115 aa).

The protein belongs to the PDCD5 family.

This is DNA-binding protein APE_1087b from Aeropyrum pernix (strain ATCC 700893 / DSM 11879 / JCM 9820 / NBRC 100138 / K1).